Here is a 577-residue protein sequence, read N- to C-terminus: Pyruvate decarboxylase (577 aa).

Positions 30 and 116 each coordinate substrate. Residues 388–482 (TPGYGVNDFI…FLINNDGYTI (95 aa)) form a thiamine pyrophosphate binding region. 3 residues coordinate Mg(2+): D450, N477, and G479. E483 provides a ligand contact to substrate.

The protein belongs to the TPP enzyme family. Homotetramer. Requires a metal cation as cofactor. The cofactor is thiamine diphosphate.

The enzyme catalyses a 2-oxocarboxylate + H(+) = an aldehyde + CO2. This Aspergillus parasiticus protein is Pyruvate decarboxylase (pdcA).